The primary structure comprises 353 residues: Photosystem II protein D1 (353 aa).

Thr-2 carries the post-translational modification N-acetylthreonine. At Thr-2 the chain carries Phosphothreonine. 3 helical membrane passes run 29 to 46 (YIGWFGVLMIPTLLTATS), 118 to 133 (HFLLGVACYMGREWEL), and 142 to 156 (WIAVAYSAPVAAATA). Residue His-118 participates in chlorophyll a binding. Residue Tyr-126 coordinates pheophytin a. [CaMn4O5] cluster is bound by residues Asp-170 and Glu-189. A helical transmembrane segment spans residues 197–218 (FHMLGVAGVFGGSLFSAMHGSL). His-198 lines the chlorophyll a pocket. A quinone-binding positions include His-215 and 264–265 (SF). His-215 contacts Fe cation. Residue His-272 coordinates Fe cation. Residues 274 to 288 (FLAAWPVVGIWFTAL) traverse the membrane as a helical segment. The [CaMn4O5] cluster site is built by His-332, Glu-333, Asp-342, and Ala-344. Residues 345 to 353 (AVEVPSTNG) constitute a propeptide that is removed on maturation.

The protein belongs to the reaction center PufL/M/PsbA/D family. In terms of assembly, PSII is composed of 1 copy each of membrane proteins PsbA, PsbB, PsbC, PsbD, PsbE, PsbF, PsbH, PsbI, PsbJ, PsbK, PsbL, PsbM, PsbT, PsbX, PsbY, PsbZ, Psb30/Ycf12, at least 3 peripheral proteins of the oxygen-evolving complex and a large number of cofactors. It forms dimeric complexes. The D1/D2 heterodimer binds P680, chlorophylls that are the primary electron donor of PSII, and subsequent electron acceptors. It shares a non-heme iron and each subunit binds pheophytin, quinone, additional chlorophylls, carotenoids and lipids. D1 provides most of the ligands for the Mn4-Ca-O5 cluster of the oxygen-evolving complex (OEC). There is also a Cl(-1) ion associated with D1 and D2, which is required for oxygen evolution. The PSII complex binds additional chlorophylls, carotenoids and specific lipids. is required as a cofactor. Post-translationally, tyr-161 forms a radical intermediate that is referred to as redox-active TyrZ, YZ or Y-Z. In terms of processing, C-terminally processed by CTPA; processing is essential to allow assembly of the oxygen-evolving complex and thus photosynthetic growth.

It is found in the plastid. Its subcellular location is the chloroplast thylakoid membrane. It catalyses the reaction 2 a plastoquinone + 4 hnu + 2 H2O = 2 a plastoquinol + O2. Its function is as follows. Photosystem II (PSII) is a light-driven water:plastoquinone oxidoreductase that uses light energy to abstract electrons from H(2)O, generating O(2) and a proton gradient subsequently used for ATP formation. It consists of a core antenna complex that captures photons, and an electron transfer chain that converts photonic excitation into a charge separation. The D1/D2 (PsbA/PsbD) reaction center heterodimer binds P680, the primary electron donor of PSII as well as several subsequent electron acceptors. In Eucalyptus globulus subsp. globulus (Tasmanian blue gum), this protein is Photosystem II protein D1.